We begin with the raw amino-acid sequence, 331 residues long: MRCWSPCSLLVVIAIYCLSSHTSEAFDLAQACVESQRLSLLPICDTIFAVQQEGAQQSADDGLRSKRFIRFGRALSGDAFLRFGKNVPDLPFEDKRFLRFGRAAPQLDDLLKQALQRVESLQKSDDTSVRRKRSTDAAPQSNTDSAEQKNDSAKITKRYVDDVEDSDVKRFMRFGKRFMRFGRNPSDVGSKLTEKRFMRFGRDPEKRFMRFGKSDDKKFMRFGRNPGDAEDELEEDKRFMRFGRGDEEDEEEAEKRFMRFGRDPEKKFMRFGKNGEEKRFMRFGRNPEEPEADKRFMRFGRGGEEDDVNTEEKRFMRFGRSAEKCKGCLEG.

The first 25 residues, 1 to 25 (MRCWSPCSLLVVIAIYCLSSHTSEA), serve as a signal peptide directing secretion. Positions 26 to 65 (FDLAQACVESQRLSLLPICDTIFAVQQEGAQQSADDGLRS) are excised as a propeptide. Phenylalanine amide is present on residues Phe71 and Phe83. A propeptide spanning residues 86 to 94 (NVPDLPFED) is cleaved from the precursor. At Phe100 the chain carries Phenylalanine amide. Residues 103–168 (AAPQLDDLLK…YVDDVEDSDV (66 aa)) constitute a propeptide that is removed on maturation. The segment at 122–153 (QKSDDTSVRRKRSTDAAPQSNTDSAEQKNDSA) is disordered. A phenylalanine amide mark is found at Phe174 and Phe181. A propeptide spanning residues 184–194 (NPSDVGSKLTE) is cleaved from the precursor. Position 200 is a phenylalanine amide (Phe200). Positions 203–205 (DPE) are excised as a propeptide. Phe211 bears the Phenylalanine amide mark. A propeptide spanning residues 214–216 (SDD) is cleaved from the precursor. Position 222 is a phenylalanine amide (Phe222). Residues 225 to 236 (NPGDAEDELEED) constitute a propeptide that is removed on maturation. Phenylalanine amide is present on Phe242. The propeptide occupies 245 to 254 (GDEEDEEEAE). Residue Phe260 is modified to Phenylalanine amide. A propeptide spanning residues 263–265 (DPE) is cleaved from the precursor. At Phe271 the chain carries Phenylalanine amide. Residues 274 to 277 (NGEE) constitute a propeptide that is removed on maturation. At Phe283 the chain carries Phenylalanine amide. Positions 286-293 (NPEEPEAD) are excised as a propeptide. Phe299 carries the post-translational modification Phenylalanine amide. The propeptide occupies 302–312 (GGEEDDVNTEE). A Phenylalanine amide modification is found at Phe318. Residues 321–331 (SAEKCKGCLEG) constitute a propeptide that is removed on maturation.

This sequence belongs to the FARP (FMRFamide related peptide) family. In terms of tissue distribution, present ubiquitously in the brain and regions of the central nervous system as well as in the periphery and throughout the dermal chromatophore layer (at protein level).

The protein localises to the secreted. In terms of biological role, excitatory neurotransmitters that directly modulate chromatophore function by activating chromatophore expansion at the chromatophore neuromuscular junction. The polypeptide is FMRFamide-related neuropeptides (Sepia officinalis (Common cuttlefish)).